The primary structure comprises 674 residues: MFIMSSISHAQLGWNDAGTPVSDQFDDVYFSNVNGLAETRYVFLEQNHLPQRWHNDDQRRFVIAETGFGTGLNFLAVWQAFVAFREANPDAKLKELHFISFEKYPLSKSDLIQAHQAWPELAQFAQKLHKHYPLAIPECQRIVLNDGLVTLDLWFGDIKDCLPKVATQEQGLVDAWFLDGFAPSKNPEMWNQNLFAGMAKLAKHGCTCATFTSAGFVRRGLIDAGFAMKKVKGFGTKREMIAGSLSEKVPYTNIAPEFRFEATHGLQEVAIIGGGIASATLATTLARRGVAVTLYCADEKPAQGASGNRQGAVYPLLSGDHNAVSRVFAPAFLFARQWIEQAAEQINFDHDWCGVTQLMWDEKATDKLKSMLEGNFPTQLVHGLSAEQTNQQVGVPVDKASVHYPLGGWLSPAELTQGLIHLLEQQGKLTAHYQTPIDALTWQPETQLWQLRSGDTLMSHQCVVIASGHQFDSLSQTAELPLGKVKGQVSHIPTTETLSKINSVLCYDGYMTPVSQQNGYHCIGASYDRQHLDATFDPQAQHENAQKLIHCLPEQTWPLEVDVSGNQSRQGVRCVSRDHLPFVGNVGEFSKITEQYRDLAQQHQAEPIALYPQLYALVGLGSRGLSSAPLMAELLASQMCGDPMPLGVDLLEQLHPSRMWVRKLRKGKALTQKV.

The tRNA (mnm(5)s(2)U34)-methyltransferase stretch occupies residues 1–246 (MFIMSSISHA…KREMIAGSLS (246 aa)). Residues 272–674 (IGGGIASATL…RKGKALTQKV (403 aa)) form an FAD-dependent cmnm(5)s(2)U34 oxidoreductase region.

The protein in the N-terminal section; belongs to the methyltransferase superfamily. tRNA (mnm(5)s(2)U34)-methyltransferase family. It in the C-terminal section; belongs to the DAO family. It depends on FAD as a cofactor.

The protein localises to the cytoplasm. The catalysed reaction is 5-aminomethyl-2-thiouridine(34) in tRNA + S-adenosyl-L-methionine = 5-methylaminomethyl-2-thiouridine(34) in tRNA + S-adenosyl-L-homocysteine + H(+). Its function is as follows. Catalyzes the last two steps in the biosynthesis of 5-methylaminomethyl-2-thiouridine (mnm(5)s(2)U) at the wobble position (U34) in tRNA. Catalyzes the FAD-dependent demodification of cmnm(5)s(2)U34 to nm(5)s(2)U34, followed by the transfer of a methyl group from S-adenosyl-L-methionine to nm(5)s(2)U34, to form mnm(5)s(2)U34. This Vibrio cholerae serotype O1 (strain ATCC 39315 / El Tor Inaba N16961) protein is tRNA 5-methylaminomethyl-2-thiouridine biosynthesis bifunctional protein MnmC.